The chain runs to 959 residues: Vacuolar membrane protease (959 aa).

Topologically, residues M1–P13 are cytoplasmic. A helical transmembrane segment spans residues V14 to L34. Residues R35–T378 are Vacuolar-facing. N-linked (GlcNAc...) asparagine glycosylation is found at N48, N102, and N105. Positions G128–D149 are disordered. Zn(2+) contacts are provided by H158 and D170. E204 functions as the Proton acceptor in the catalytic mechanism. Zn(2+) is bound by residues E205, E230, and H303. A helical transmembrane segment spans residues M379–F399. Topologically, residues G400–G432 are cytoplasmic. A helical transmembrane segment spans residues F433–L453. Residues M454–Y463 are Vacuolar-facing. The chain crosses the membrane as a helical span at residues S464–F484. Over S485–R498 the chain is Cytoplasmic. Residues M499–L519 form a helical membrane-spanning segment. At S520–Q524 the chain is on the vacuolar side. A helical transmembrane segment spans residues V525–S545. Residues Y546–K645 lie on the Cytoplasmic side of the membrane. 2 disordered regions span residues D566 to E594 and F606 to P635. Positions R612 to E626 are enriched in basic and acidic residues. A helical transmembrane segment spans residues L646–V666. The Vacuolar segment spans residues G667 to L688. An N-linked (GlcNAc...) asparagine glycan is attached at N685. Residues F689–I709 form a helical membrane-spanning segment. The Cytoplasmic portion of the chain corresponds to H710–V716. Residues P717 to F737 form a helical membrane-spanning segment. Over S738–V959 the chain is Vacuolar. N785, N818, N834, N864, and N899 each carry an N-linked (GlcNAc...) asparagine glycan.

Belongs to the peptidase M28 family. The cofactor is Zn(2+).

Its subcellular location is the vacuole membrane. Its function is as follows. May be involved in vacuolar sorting and osmoregulation. The chain is Vacuolar membrane protease from Phaeosphaeria nodorum (strain SN15 / ATCC MYA-4574 / FGSC 10173) (Glume blotch fungus).